We begin with the raw amino-acid sequence, 1358 residues long: DNA-directed RNA polymerase subunit beta (1358 aa).

The protein belongs to the RNA polymerase beta chain family. As to quaternary structure, the RNAP catalytic core consists of 2 alpha, 1 beta, 1 beta' and 1 omega subunit. When a sigma factor is associated with the core the holoenzyme is formed, which can initiate transcription.

The catalysed reaction is RNA(n) + a ribonucleoside 5'-triphosphate = RNA(n+1) + diphosphate. DNA-dependent RNA polymerase catalyzes the transcription of DNA into RNA using the four ribonucleoside triphosphates as substrates. This chain is DNA-directed RNA polymerase subunit beta, found in Francisella tularensis subsp. novicida (strain U112).